The following is a 552-amino-acid chain: Cycloheximide resistance protein (552 aa).

Positions 46–70 (VLNSSDKSQSSENKEQTEGDQATIQ) are disordered. Residues 47–56 (LNSSDKSQSS) are compositionally biased toward polar residues. Transmembrane regions (helical) follow at residues 100-120 (AIAA…SAIY), 137-157 (LATL…LFWS), 168-188 (TPLY…TALS), 194-213 (LSVL…STGG), 225-246 (YSIA…GPLI), 262-282 (WSFW…SFSL), 346-362 (IYIA…FESV), 381-399 (YVST…LPTV), 419-439 (LPPA…FGWT), 445-464 (NWFV…FIIF), 477-494 (VEYL…RSVS), and 518-539 (WGSS…FFYL).

The protein belongs to the major facilitator superfamily. CAR1 family.

The protein resides in the membrane. Its function is as follows. Probable transporter. Confers resistance to cycloheximide. The chain is Cycloheximide resistance protein (CYHR) from Candida maltosa (Yeast).